The following is a 229-amino-acid chain: Ribonuclease 3 (229 aa).

Positions 2–130 (FEKLQDVLCY…ILGAIFLDGG (129 aa)) constitute an RNase III domain. Glu-43 is a Mg(2+) binding site. The active site involves Asp-47. Residues Asp-116 and Glu-119 each coordinate Mg(2+). The active site involves Glu-119. Positions 157–226 (DAKSTLQELT…AGLALELLEG (70 aa)) constitute a DRBM domain.

Belongs to the ribonuclease III family. In terms of assembly, homodimer. It depends on Mg(2+) as a cofactor.

It is found in the cytoplasm. It carries out the reaction Endonucleolytic cleavage to 5'-phosphomonoester.. Its function is as follows. Digests double-stranded RNA. Involved in the processing of primary rRNA transcript to yield the immediate precursors to the large and small rRNAs (23S and 16S). Processes some mRNAs, and tRNAs when they are encoded in the rRNA operon. Processes pre-crRNA and tracrRNA of type II CRISPR loci if present in the organism. In Oleidesulfovibrio alaskensis (strain ATCC BAA-1058 / DSM 17464 / G20) (Desulfovibrio alaskensis), this protein is Ribonuclease 3.